Reading from the N-terminus, the 39-residue chain is Photosystem II reaction center protein L (39 aa).

The chain crosses the membrane as a helical span at residues 18 to 38; the sequence is ILYWGLLLIFVLAVLFSNYFF.

This sequence belongs to the PsbL family. As to quaternary structure, PSII is composed of 1 copy each of membrane proteins PsbA, PsbB, PsbC, PsbD, PsbE, PsbF, PsbH, PsbI, PsbJ, PsbK, PsbL, PsbM, PsbT, PsbX, PsbY, PsbZ, Psb30/Ycf12, at least 3 peripheral proteins of the oxygen-evolving complex and a large number of cofactors. It forms dimeric complexes.

It is found in the plastid membrane. Functionally, one of the components of the core complex of photosystem II (PSII). PSII is a light-driven water:plastoquinone oxidoreductase that uses light energy to abstract electrons from H(2)O, generating O(2) and a proton gradient subsequently used for ATP formation. It consists of a core antenna complex that captures photons, and an electron transfer chain that converts photonic excitation into a charge separation. This subunit is found at the monomer-monomer interface and is required for correct PSII assembly and/or dimerization. This is Photosystem II reaction center protein L from Cuscuta pentagona (Five-angled dodder).